A 123-amino-acid chain; its full sequence is Ribosome-binding factor A (123 aa).

This sequence belongs to the RbfA family. As to quaternary structure, monomer. Binds 30S ribosomal subunits, but not 50S ribosomal subunits or 70S ribosomes.

It localises to the cytoplasm. Functionally, one of several proteins that assist in the late maturation steps of the functional core of the 30S ribosomal subunit. Associates with free 30S ribosomal subunits (but not with 30S subunits that are part of 70S ribosomes or polysomes). Required for efficient processing of 16S rRNA. May interact with the 5'-terminal helix region of 16S rRNA. The sequence is that of Ribosome-binding factor A from Variovorax paradoxus (strain S110).